A 667-amino-acid polypeptide reads, in one-letter code: Cylicin-1 (667 aa).

Disordered regions lie at residues P121–V251 and S275–S634. Positions K129–P172 are enriched in basic and acidic residues. Positions S173–S182 are enriched in low complexity. Basic and acidic residues predominate over residues S187 to D197. A compositionally biased stretch (low complexity) spans S223–S237. The span at D238–V251 shows a compositional bias: polar residues. 9 stretches are compositionally biased toward basic and acidic residues: residues K284–E326, S345–K371, S380–E394, S417–E431, G438–V464, S483–T506, S521–T533, K549–D558, and D583–R593. Repeat copies occupy residues A287 to D305, A306 to D337, A338 to D368, A369 to D405, A406 to N442, A443 to D475, A476 to K516, V517 to Y547, and L548 to G569. Positions A287 to G569 are 9 X approximate tandem repeats. Positions P624–P633 are enriched in pro residues.

Interacts with proteins of spermatozoa head including ACTL7A, CCIN, FAM209A and SPACA1; the interactions may be necessary for proper acrosome attachment to the nuclear envelope. Testis.

It localises to the cytoplasm. The protein resides in the cytoskeleton. Its subcellular location is the perinuclear theca. It is found in the calyx. In terms of biological role, plays a role in the establishment of normal sperm morphology during spermatogenesis and is required for acrosome attachment to the nuclear envelope. This chain is Cylicin-1 (CYLC1), found in Bos taurus (Bovine).